The chain runs to 235 residues: Isoprenyl transferase (235 aa).

Asp21 is a catalytic residue. Asp21 is a binding site for Mg(2+). Residues Gly22 to Arg25, Trp26, Lys34, His38, and Ser66 to Glu68 each bind substrate. The Proton acceptor role is filled by Asn69. Substrate-binding positions include Trp70, Arg72, Arg183, and Arg189 to Ser191. Glu202 contributes to the Mg(2+) binding site.

Belongs to the UPP synthase family. Homodimer. Mg(2+) is required as a cofactor.

In terms of biological role, catalyzes the condensation of isopentenyl diphosphate (IPP) with allylic pyrophosphates generating different type of terpenoids. The chain is Isoprenyl transferase from Rickettsia felis (strain ATCC VR-1525 / URRWXCal2) (Rickettsia azadi).